Consider the following 259-residue polypeptide: Large ribosomal subunit protein uL2m (259 aa).

Positions Val234 to Glu259 are disordered. A compositionally biased stretch (basic and acidic residues) spans Pro250–Glu259.

It belongs to the universal ribosomal protein uL2 family.

The protein resides in the mitochondrion. This chain is Large ribosomal subunit protein uL2m (RPL2), found in Paramecium tetraurelia.